A 308-amino-acid chain; its full sequence is Pantothenate kinase (308 aa).

ATP is bound at residue glycine 90 to serine 97.

The protein belongs to the prokaryotic pantothenate kinase family.

Its subcellular location is the cytoplasm. The catalysed reaction is (R)-pantothenate + ATP = (R)-4'-phosphopantothenate + ADP + H(+). The protein operates within cofactor biosynthesis; coenzyme A biosynthesis; CoA from (R)-pantothenate: step 1/5. This chain is Pantothenate kinase, found in Sorangium cellulosum (strain So ce56) (Polyangium cellulosum (strain So ce56)).